The following is a 154-amino-acid chain: 6,7-dimethyl-8-ribityllumazine synthase (154 aa).

5-amino-6-(D-ribitylamino)uracil is bound by residues F22, 56–58 (AFE), and 80–82 (AVI). Position 85-86 (85-86 (AT)) interacts with (2S)-2-hydroxy-3-oxobutyl phosphate. H88 serves as the catalytic Proton donor. Residue F113 participates in 5-amino-6-(D-ribitylamino)uracil binding. R127 is a (2S)-2-hydroxy-3-oxobutyl phosphate binding site.

The protein belongs to the DMRL synthase family.

It carries out the reaction (2S)-2-hydroxy-3-oxobutyl phosphate + 5-amino-6-(D-ribitylamino)uracil = 6,7-dimethyl-8-(1-D-ribityl)lumazine + phosphate + 2 H2O + H(+). It participates in cofactor biosynthesis; riboflavin biosynthesis; riboflavin from 2-hydroxy-3-oxobutyl phosphate and 5-amino-6-(D-ribitylamino)uracil: step 1/2. Functionally, catalyzes the formation of 6,7-dimethyl-8-ribityllumazine by condensation of 5-amino-6-(D-ribitylamino)uracil with 3,4-dihydroxy-2-butanone 4-phosphate. This is the penultimate step in the biosynthesis of riboflavin. In Agathobacter rectalis (strain ATCC 33656 / DSM 3377 / JCM 17463 / KCTC 5835 / VPI 0990) (Eubacterium rectale), this protein is 6,7-dimethyl-8-ribityllumazine synthase.